The chain runs to 328 residues: Glycerol-3-phosphate dehydrogenase [NAD(P)+] (328 aa).

NADPH-binding residues include Trp15, Arg35, and Lys108. Lys108, Gly136, and Ser138 together coordinate sn-glycerol 3-phosphate. Position 140 (Ala140) interacts with NADPH. Sn-glycerol 3-phosphate-binding residues include Lys191, Asp244, Ser254, Arg255, and Asn256. Catalysis depends on Lys191, which acts as the Proton acceptor. An NADPH-binding site is contributed by Arg255. The NADPH site is built by Leu275 and Glu277.

This sequence belongs to the NAD-dependent glycerol-3-phosphate dehydrogenase family.

The protein resides in the cytoplasm. It carries out the reaction sn-glycerol 3-phosphate + NAD(+) = dihydroxyacetone phosphate + NADH + H(+). The catalysed reaction is sn-glycerol 3-phosphate + NADP(+) = dihydroxyacetone phosphate + NADPH + H(+). Its pathway is membrane lipid metabolism; glycerophospholipid metabolism. Catalyzes the reduction of the glycolytic intermediate dihydroxyacetone phosphate (DHAP) to sn-glycerol 3-phosphate (G3P), the key precursor for phospholipid synthesis. This chain is Glycerol-3-phosphate dehydrogenase [NAD(P)+], found in Azorhizobium caulinodans (strain ATCC 43989 / DSM 5975 / JCM 20966 / LMG 6465 / NBRC 14845 / NCIMB 13405 / ORS 571).